We begin with the raw amino-acid sequence, 209 residues long: Uracil phosphoribosyltransferase (209 aa).

5-phospho-alpha-D-ribose 1-diphosphate contacts are provided by residues R79, R104, and 131–139; that span reads DPMLATGGS. Uracil-binding positions include I194 and 199–201; that span reads GDA. Residue D200 coordinates 5-phospho-alpha-D-ribose 1-diphosphate.

It belongs to the UPRTase family. Mg(2+) serves as cofactor.

The enzyme catalyses UMP + diphosphate = 5-phospho-alpha-D-ribose 1-diphosphate + uracil. Its pathway is pyrimidine metabolism; UMP biosynthesis via salvage pathway; UMP from uracil: step 1/1. Allosterically activated by GTP. Its function is as follows. Catalyzes the conversion of uracil and 5-phospho-alpha-D-ribose 1-diphosphate (PRPP) to UMP and diphosphate. This Streptococcus sanguinis (strain SK36) protein is Uracil phosphoribosyltransferase.